The primary structure comprises 274 residues: 3-methyl-2-oxobutanoate hydroxymethyltransferase (274 aa).

Mg(2+)-binding residues include Asp-49 and Asp-88. Residues 49–50, Asp-88, and Lys-118 each bind 3-methyl-2-oxobutanoate; that span reads DS. A Mg(2+)-binding site is contributed by Glu-120. Glu-187 (proton acceptor) is an active-site residue.

Belongs to the PanB family. As to quaternary structure, homodecamer; pentamer of dimers. Mg(2+) is required as a cofactor.

The protein resides in the cytoplasm. It carries out the reaction 3-methyl-2-oxobutanoate + (6R)-5,10-methylene-5,6,7,8-tetrahydrofolate + H2O = 2-dehydropantoate + (6S)-5,6,7,8-tetrahydrofolate. Its pathway is cofactor biosynthesis; (R)-pantothenate biosynthesis; (R)-pantoate from 3-methyl-2-oxobutanoate: step 1/2. Its function is as follows. Catalyzes the reversible reaction in which hydroxymethyl group from 5,10-methylenetetrahydrofolate is transferred onto alpha-ketoisovalerate to form ketopantoate. The polypeptide is 3-methyl-2-oxobutanoate hydroxymethyltransferase (Paramagnetospirillum magneticum (strain ATCC 700264 / AMB-1) (Magnetospirillum magneticum)).